We begin with the raw amino-acid sequence, 428 residues long: tRNA dimethylallyltransferase (428 aa).

21 to 28 serves as a coordination point for ATP; the sequence is GTTGVGKS. Dimethylallyl diphosphate is bound at residue 23–28; sequence TGVGKS. 2 interaction with substrate tRNA regions span residues 46 to 49 and 170 to 174; these read DSMQ and RRVQR. Residues 199–207 are core aggregation region; the sequence is FDTLFLWLY. The interval 210–232 is interaction with isopentenylpyrophosphate transferase; the sequence is PEPLFQRLDDRVDDMLERGALQE. Interaction with substrate tRNA stretches follow at residues 256-258 and 284-302; these read QVI and RMKT…WIKK. The Matrin-type zinc-finger motif lies at 373–409; sequence YTCNVCRNADGKNVVAIGEKYWKIHLGSRRHKSNLKR. Residues Cys375, Cys378, His397, and His403 each coordinate Zn(2+).

Belongs to the IPP transferase family.

The protein localises to the cytoplasm. It localises to the mitochondrion. Its subcellular location is the nucleus. It carries out the reaction adenosine(37) in tRNA + dimethylallyl diphosphate = N(6)-dimethylallyladenosine(37) in tRNA + diphosphate. Its function is as follows. Catalyzes the transfer of a dimethylallyl group onto the adenine at position 37 in the anticodon loop on a specific subset of tRNAs both in the cytosol and the mitochondrion, leading to the formation of N6-(dimethylallyl)adenosine (i(6)A). This modification optimizes the codon:anticodon fit in the ribosome and promotes translational fidelity. Competes with the farnesyl pyrophosphate synthase ERG20 for the common substrate dimethylallyl diphosphate (DMAPP). In Saccharomyces cerevisiae (strain ATCC 204508 / S288c) (Baker's yeast), this protein is tRNA dimethylallyltransferase (MOD5).